Reading from the N-terminus, the 458-residue chain is tRNA modification GTPase MnmE (458 aa).

R23, E80, and K122 together coordinate (6S)-5-formyl-5,6,7,8-tetrahydrofolate. The TrmE-type G domain maps to 218–380 (GMKIVIAGRP…LREHLQQTMG (163 aa)). N228 lines the K(+) pocket. Residues 228 to 233 (NVGKSS), 247 to 253 (TQIPGTT), 272 to 275 (DTAG), and 361 to 363 (SAR) contribute to the GTP site. Mg(2+) is bound at residue S232. Residues T247, I249, and T252 each contribute to the K(+) site. Residue T253 participates in Mg(2+) binding. (6S)-5-formyl-5,6,7,8-tetrahydrofolate is bound at residue K458.

The protein belongs to the TRAFAC class TrmE-Era-EngA-EngB-Septin-like GTPase superfamily. TrmE GTPase family. Homodimer. Heterotetramer of two MnmE and two MnmG subunits. K(+) is required as a cofactor.

Its subcellular location is the cytoplasm. Exhibits a very high intrinsic GTPase hydrolysis rate. Involved in the addition of a carboxymethylaminomethyl (cmnm) group at the wobble position (U34) of certain tRNAs, forming tRNA-cmnm(5)s(2)U34. This chain is tRNA modification GTPase MnmE, found in Hamiltonella defensa subsp. Acyrthosiphon pisum (strain 5AT).